The sequence spans 115 residues: NADH-ubiquinone oxidoreductase chain 3 (115 aa).

The next 3 helical transmembrane spans lie at 4 to 24 (FMAL…AFWL), 55 to 75 (FFLV…LLPL), and 87 to 107 (MMLT…YEWV).

Belongs to the complex I subunit 3 family. In terms of assembly, core subunit of respiratory chain NADH dehydrogenase (Complex I) which is composed of 45 different subunits. Interacts with TMEM186. Interacts with TMEM242.

It is found in the mitochondrion inner membrane. The catalysed reaction is a ubiquinone + NADH + 5 H(+)(in) = a ubiquinol + NAD(+) + 4 H(+)(out). Its function is as follows. Core subunit of the mitochondrial membrane respiratory chain NADH dehydrogenase (Complex I) which catalyzes electron transfer from NADH through the respiratory chain, using ubiquinone as an electron acceptor. Essential for the catalytic activity of complex I. The sequence is that of NADH-ubiquinone oxidoreductase chain 3 from Osgoodomys banderanus (Michoacan deer mouse).